Reading from the N-terminus, the 423-residue chain is MTTKLKGLKELGNTSDPLRTVSYQVRTKMSDYEDDNTDVQSLTVEEEYELWNSNVPVMYEFVSETKLTWPSLTIQWLPSDGQSPEQSLIFGTHTAGEEVNYLKVATINLPAGIAGLDQGDEEDEANDHSSFAIANKFPHIEEVIRARYMPANSNIIATINGKGTISIFDRTLEESKAQVSTLAFHKENGYGLAFNPHISGELLSGSDDTTVALWDIEAAKKPKSILTSHDDIVNDVKWHEFESNVFGTVSEDKTLQVHDKRVRLEPVKKLPTASPFNTLSFSKHSRNLLAAAGVDSQIYLYDMRDMSSPLHVMSGHQDSVTTVEFSPHTDGIICSSGSDRRAIIWDLTQIGAEQSQDDADDGAPELMMMHAGHRSPVNEFSFNPQIPWLLASTEEDNVIQAWKVSMKLVNASPPAISDPSLLV.

5 WD repeats span residues proline 138 to glutamate 174, serine 175 to serine 224, serine 228 to lysine 268, proline 271 to histidine 311, and glycine 315 to serine 355. The tract at residues aspartate 357–aspartate 361 is interaction with the histone H4 N-terminus. The WD 6 repeat unit spans residues glycine 372–serine 412.

This sequence belongs to the WD repeat RBAP46/RBAP48/MSI1 family. Component of the HAT-B complex composed of at least HAT1 and HAT2. The HAT-B complex binds to histone H4 tail.

It localises to the cytoplasm. It is found in the nucleus. Regulatory subunit of the histone acetylase B (HAT-B) complex. The complex acetylates 'Lys-12' of histone H4 which is required for telomeric silencing. The polypeptide is Histone acetyltransferase type B subunit 2 (HAT2) (Eremothecium gossypii (strain ATCC 10895 / CBS 109.51 / FGSC 9923 / NRRL Y-1056) (Yeast)).